A 130-amino-acid chain; its full sequence is Cysteine methyltransferase (130 aa).

The catalysed reaction is [trehalose-6-phosphate synthase]-L-cysteine + S-adenosyl-L-methionine = [trehalose-6-phosphate synthase]-S-methyl-L-cysteine + S-adenosyl-L-homocysteine + H(+). S-adenosyl-L-methionine-dependent protein-cysteine S-methyltransferase with broad substrate specificity. Methylates trehalose-6-phosphate synthase (TPS), enhancing its enzymatic activity and promoting trehalose synthesis upon entry of cells into stationary phase. In Saccharomyces cerevisiae (Baker's yeast), this protein is Cysteine methyltransferase.